A 361-amino-acid polypeptide reads, in one-letter code: MSDNAAFKFGSFDYICEHAALVVCPMLGDQQGMAPTCYSRNVQLGSQIIFQPATCILHIAALVMATIMLLHVRSKYTAVGRKEIVLFFYMYIWVELFAIFLDSAIIPTANKVYPWFAAIYAGSVGALYWCLLLNGFVGFQFHEDGTPMSLWFLRISSLVVGAVCFGIPVATFKGTSSSMSPTNTVGLFITYLVFPCVCVLIYFISQMLLVVRTLDDRWVIGDLLFMAGFYIAGVLLLVTFSVTICDAVKHYVDGVFFSTLAFLFAVMMVYKYWDSITKEDLEFSVGSKQAVWDVKDPLLATGMEYYEDDAQSAYRGAGGSLVGGYNGNQYYGNQPGYAQSAYGQQGYGQYGAGGGYGQGHY.

The next 7 helical transmembrane spans lie at 48 to 68 (IIFQ…ATIM), 86 to 106 (LFFY…SAII), 119 to 139 (IYAG…FVGF), 150 to 170 (LWFL…IPVA), 184 to 204 (TVGL…IYFI), 218 to 238 (WVIG…LLLV), and 250 to 270 (HYVD…MMVY).

It belongs to the CHS7 family. As to quaternary structure, interacts with CHS3.

Its subcellular location is the endoplasmic reticulum membrane. Its function is as follows. Chaperone required for the export of the chitin synthase CHS3 from the endoplasmic reticulum. The chain is Chitin synthase export chaperone (CHS7) from Cryptococcus neoformans var. neoformans serotype D (strain JEC21 / ATCC MYA-565) (Filobasidiella neoformans).